The chain runs to 184 residues: Large ribosomal subunit protein uL15 (184 aa).

Residues 1-55 (MDLSSLSPAKGSVKNKKRVGRGQGSGNGTTAGKGNKGQQSRSGYKRPVSEGGQMP) are disordered. Residues 21-35 (RGQGSGNGTTAGKGN) are compositionally biased toward gly residues.

The protein belongs to the universal ribosomal protein uL15 family. Part of the 50S ribosomal subunit.

Its function is as follows. Binds to the 23S rRNA. This is Large ribosomal subunit protein uL15 from Prosthecochloris aestuarii (strain DSM 271 / SK 413).